Consider the following 722-residue polypeptide: Bifunctional UDP-N-acetylglucosamine 2-epimerase/N-acetylmannosamine kinase (722 aa).

Residues arginine 19, serine 23, arginine 113, histidine 220, and asparagine 253 each coordinate UDP. Positions 259, 271, 280, and 281 each coordinate CMP-N-acetyl-beta-neuraminate. UDP contacts are provided by valine 282, serine 301, serine 302, glutamate 307, and arginine 321. Residues 406–722 (TLSALAVDLG…VLDYTTRRIH (317 aa)) are N-acetylmannosamine kinase. Aspartate 413 contacts Mg(2+). Residue glycine 416 coordinates an N-acyl-D-mannosamine 6-phosphate. The ADP site is built by threonine 417, asparagine 418, and arginine 420. An N-acyl-D-mannosamine 6-phosphate-binding residues include glycine 476, arginine 477, threonine 489, asparagine 516, aspartate 517, and glycine 545. Residues glycine 476, arginine 477, threonine 489, asparagine 516, and aspartate 517 each contribute to the an N-acyl-D-mannosamine site. Residue aspartate 517 is part of the active site. An N-acyl-D-mannosamine contacts are provided by glutamate 566 and histidine 569. An an N-acyl-D-mannosamine 6-phosphate-binding site is contributed by histidine 569. Histidine 569, cysteine 579, cysteine 581, and cysteine 586 together coordinate Zn(2+). An an N-acyl-D-mannosamine 6-phosphate-binding site is contributed by glutamate 588. An N-acyl-D-mannosamine is bound at residue glutamate 588.

In the N-terminal section; belongs to the UDP-N-acetylglucosamine 2-epimerase family. The protein in the C-terminal section; belongs to the ROK (NagC/XylR) family. Homodimer. Homotetramer. Homohexamer. The hexameric form exhibits both enzyme activities, whereas the dimeric form only catalyzes the phosphorylation of N-acyl-D-mannosamine. Post-translationally, phosphorylated. Phosphorylation by PKC activates the UDP-N-acetylglucosamine 2-epimerase activity.

The protein resides in the cytoplasm. It is found in the cytosol. It catalyses the reaction UDP-N-acetyl-alpha-D-glucosamine + H2O = aldehydo-N-acetyl-D-mannosamine + UDP + H(+). The catalysed reaction is an N-acyl-D-mannosamine + ATP = an N-acyl-D-mannosamine 6-phosphate + ADP + H(+). It participates in amino-sugar metabolism; N-acetylneuraminate biosynthesis. The UDP-N-acetylglucosamine 2-epimerase activity, in contrast to the N-acetylmannosamine kinase activity, exhibits allosteric regulation by cytidine monophosphate-N-acetylneuraminic acid (CMP-Neu5Ac), the end product of neuraminic acid biosynthesis. Moreover, the activity is contingent upon the oligomeric state of the enzyme. The monomeric form is inactive, while the dimeric form selectively catalyzes the phosphorylation of N-acetylmannosamine. The hexameric form, on the other hand, demonstrates full proficiency in both enzyme activities. Furthermore, the UDP-N-acetylglucosamine 2-epimerase activity is increased by PKC-mediated phosphorylation. Functionally, bifunctional enzyme that possesses both UDP-N-acetylglucosamine 2-epimerase and N-acetylmannosamine kinase activities, and serves as the initiator of the biosynthetic pathway leading to the production of N-acetylneuraminic acid (NeuAc), a critical precursor in the synthesis of sialic acids. By catalyzing this pivotal and rate-limiting step in sialic acid biosynthesis, this enzyme assumes a pivotal role in governing the regulation of cell surface sialylation, playing a role in embryonic angiogenesis. Sialic acids represent a category of negatively charged sugars that reside on the surface of cells as terminal components of glycoconjugates and mediate important functions in various cellular processes, including cell adhesion, signal transduction, and cellular recognition. This is Bifunctional UDP-N-acetylglucosamine 2-epimerase/N-acetylmannosamine kinase (GNE) from Cricetulus griseus (Chinese hamster).